The primary structure comprises 427 residues: Gamma-glutamyl phosphate reductase (427 aa).

Belongs to the gamma-glutamyl phosphate reductase family.

The protein localises to the cytoplasm. It catalyses the reaction L-glutamate 5-semialdehyde + phosphate + NADP(+) = L-glutamyl 5-phosphate + NADPH + H(+). It functions in the pathway amino-acid biosynthesis; L-proline biosynthesis; L-glutamate 5-semialdehyde from L-glutamate: step 2/2. Functionally, catalyzes the NADPH-dependent reduction of L-glutamate 5-phosphate into L-glutamate 5-semialdehyde and phosphate. The product spontaneously undergoes cyclization to form 1-pyrroline-5-carboxylate. This Streptomyces griseus subsp. griseus (strain JCM 4626 / CBS 651.72 / NBRC 13350 / KCC S-0626 / ISP 5235) protein is Gamma-glutamyl phosphate reductase.